The following is a 50-amino-acid chain: Small ribosomal subunit protein uS14 (50 aa).

4 residues coordinate Zn(2+): cysteine 15, cysteine 18, cysteine 33, and cysteine 36.

The protein belongs to the universal ribosomal protein uS14 family. Zinc-binding uS14 subfamily. As to quaternary structure, part of the 30S ribosomal subunit. Requires Zn(2+) as cofactor.

Functionally, binds 16S rRNA, required for the assembly of 30S particles. In Methanothermobacter thermautotrophicus (strain ATCC 29096 / DSM 1053 / JCM 10044 / NBRC 100330 / Delta H) (Methanobacterium thermoautotrophicum), this protein is Small ribosomal subunit protein uS14.